The following is a 551-amino-acid chain: Glucans biosynthesis protein D (551 aa).

Residues 1–32 (MDRRRFIKGSMAMAAVCGTSGIASLFSQAAFA) constitute a signal peptide (tat-type signal).

It belongs to the OpgD/OpgG family. Predicted to be exported by the Tat system. The position of the signal peptide cleavage has not been experimentally proven.

It is found in the periplasm. The protein operates within glycan metabolism; osmoregulated periplasmic glucan (OPG) biosynthesis. In terms of biological role, probably involved in the control of the structural glucose backbone of osmoregulated periplasmic glucans (OPGs). The sequence is that of Glucans biosynthesis protein D from Escherichia coli O139:H28 (strain E24377A / ETEC).